A 445-amino-acid chain; its full sequence is UPF0210 protein SPG_0223 (445 aa).

Belongs to the UPF0210 family. Homodimer.

This chain is UPF0210 protein SPG_0223, found in Streptococcus pneumoniae serotype 19F (strain G54).